The primary structure comprises 114 residues: Hydrogenase maturation factor HypA (114 aa).

H2 serves as a coordination point for Ni(2+). Zn(2+) is bound by residues C73, C76, C89, and C92.

The protein belongs to the HypA/HybF family.

Its function is as follows. Involved in the maturation of [NiFe] hydrogenases. Required for nickel insertion into the metal center of the hydrogenase. This is Hydrogenase maturation factor HypA from Azoarcus sp. (strain BH72).